The chain runs to 184 residues: uncharacterized protein (184 aa).

Residues 130–149 are disordered; that stretch reads DKDDDKKKKKKDDKKDDPCN.

The protein localises to the virion. This is an uncharacterized protein from Acanthamoeba polyphaga (Amoeba).